The chain runs to 782 residues: E3 UFM1-protein ligase 1 homolog (782 aa).

The segment at 404 to 478 (NVSTQELEDE…SRGGGGASKK (75 aa)) is disordered.

The protein belongs to the UFL1 family.

E3 UFM1-protein ligase that mediates ufmylation of target proteins. The sequence is that of E3 UFM1-protein ligase 1 homolog from Drosophila melanogaster (Fruit fly).